Consider the following 345-residue polypeptide: Ferrochelatase (345 aa).

2 residues coordinate Fe cation: His-192 and Glu-295.

It belongs to the ferrochelatase family.

Its subcellular location is the cytoplasm. The enzyme catalyses heme b + 2 H(+) = protoporphyrin IX + Fe(2+). Its pathway is porphyrin-containing compound metabolism; protoheme biosynthesis; protoheme from protoporphyrin-IX: step 1/1. Catalyzes the ferrous insertion into protoporphyrin IX. This is Ferrochelatase from Opitutus terrae (strain DSM 11246 / JCM 15787 / PB90-1).